Here is a 237-residue protein sequence, read N- to C-terminus: 1-(5-phosphoribosyl)-5-[(5-phosphoribosylamino)methylideneamino] imidazole-4-carboxamide isomerase (237 aa).

The Proton acceptor role is filled by Asp-8. The Proton donor role is filled by Asp-129.

Belongs to the HisA/HisF family.

The protein resides in the cytoplasm. The enzyme catalyses 1-(5-phospho-beta-D-ribosyl)-5-[(5-phospho-beta-D-ribosylamino)methylideneamino]imidazole-4-carboxamide = 5-[(5-phospho-1-deoxy-D-ribulos-1-ylimino)methylamino]-1-(5-phospho-beta-D-ribosyl)imidazole-4-carboxamide. It functions in the pathway amino-acid biosynthesis; L-histidine biosynthesis; L-histidine from 5-phospho-alpha-D-ribose 1-diphosphate: step 4/9. The sequence is that of 1-(5-phosphoribosyl)-5-[(5-phosphoribosylamino)methylideneamino] imidazole-4-carboxamide isomerase from Roseiflexus sp. (strain RS-1).